The primary structure comprises 142 residues: Protein SprT-like (142 aa).

In terms of domain architecture, SprT-like spans Tyr4–Leu138. His62 is a Zn(2+) binding site. The active site involves Glu63. A Zn(2+)-binding site is contributed by His66.

This sequence belongs to the SprT family. Zn(2+) serves as cofactor.

Its subcellular location is the cytoplasm. The polypeptide is Protein SprT-like (Streptococcus agalactiae serotype Ia (strain ATCC 27591 / A909 / CDC SS700)).